The primary structure comprises 56 residues: ComX pheromone (56 aa).

A propeptide spanning residues 1 to 50 is cleaved from the precursor; it reads MMQDLINYFLSYPEVLKKLKNREACLIGFSSNETETIIKAYNDYHLSSPT. Trp-54 carries the post-translational modification Tryptophan derivative. Trp-54 carries 3'-farnesyl-2',N2-cyclotryptophan lipidation.

In terms of assembly, interacts directly with the sensor histidine kinase ComP and stimulates its activity. In terms of processing, trp-54 is modified by farnesylation, which is essential for activity. Modified by the tryptophan prenyltransferase ComQ before export to the extracellular environment. The type of isoprenyl derivative differs among the different pherotypes and depends on ComX primary sequence.

The protein resides in the secreted. Part of a major quorum-sensing system that regulates the development of genetic competence. Acts through the activation of the two-component regulatory system ComP/ComA composed of a sensor histidine kinase, ComP, and a response regulator, ComA. This chain is ComX pheromone, found in Bacillus mojavensis.